A 510-amino-acid polypeptide reads, in one-letter code: 2,3-bisphosphoglycerate-independent phosphoglycerate mutase (510 aa).

Position 12 (aspartate 12) interacts with Mn(2+). Tyrosine 36 carries the post-translational modification Phosphotyrosine. Serine 62 serves as a coordination point for Mn(2+). Serine 62 acts as the Phosphoserine intermediate in catalysis. Residues histidine 123, 153–154, arginine 185, arginine 191, 261–264, and lysine 336 each bind substrate; these read RD and RPDR. Residues aspartate 403, histidine 407, aspartate 444, histidine 445, and histidine 462 each contribute to the Mn(2+) site.

It belongs to the BPG-independent phosphoglycerate mutase family. In terms of assembly, monomer. Mn(2+) serves as cofactor.

It carries out the reaction (2R)-2-phosphoglycerate = (2R)-3-phosphoglycerate. It functions in the pathway carbohydrate degradation; glycolysis; pyruvate from D-glyceraldehyde 3-phosphate: step 3/5. Functionally, essential for rapid growth and for sporulation. Catalyzes the interconversion of 2-phosphoglycerate and 3-phosphoglycerate. This Shouchella clausii (strain KSM-K16) (Alkalihalobacillus clausii) protein is 2,3-bisphosphoglycerate-independent phosphoglycerate mutase.